Here is a 431-residue protein sequence, read N- to C-terminus: Protein CLT2, chloroplastic (431 aa).

A chloroplast-targeting transit peptide spans methionine 1–glycine 79. Helical transmembrane passes span valine 99 to methionine 119, tyrosine 122 to leucine 142, phenylalanine 163 to methionine 183, valine 188 to leucine 208, phenylalanine 212 to serine 232, isoleucine 244 to isoleucine 264, isoleucine 284 to proline 304, isoleucine 343 to valine 363, isoleucine 365 to isoleucine 385, and phenylalanine 403 to proline 423.

This sequence belongs to the CRT-like transporter family.

Its subcellular location is the plastid. The protein localises to the chloroplast membrane. In terms of biological role, involved in thiol transport from the plastid to the cytosol. Transports probably both glutathione (GSH) and its precursor, gamma-glutamylcysteine (gamma-EC). The sequence is that of Protein CLT2, chloroplastic from Arabidopsis thaliana (Mouse-ear cress).